The following is a 338-amino-acid chain: Ketol-acid reductoisomerase (NADP(+)) (338 aa).

The KARI N-terminal Rossmann domain maps to 1 to 181 (MKVFYDKDCD…GGGRAGIIET (181 aa)). Residues 24–27 (YGSQ), arginine 47, and serine 52 each bind NADP(+). Histidine 107 is a catalytic residue. Glycine 133 serves as a coordination point for NADP(+). Residues 182 to 327 (NFREETETDL…AKLRAMMPWI (146 aa)) form the KARI C-terminal knotted domain. Mg(2+) contacts are provided by aspartate 190, glutamate 194, glutamate 226, and glutamate 230. Serine 251 provides a ligand contact to substrate.

The protein belongs to the ketol-acid reductoisomerase family. Mg(2+) serves as cofactor.

It carries out the reaction (2R)-2,3-dihydroxy-3-methylbutanoate + NADP(+) = (2S)-2-acetolactate + NADPH + H(+). It catalyses the reaction (2R,3R)-2,3-dihydroxy-3-methylpentanoate + NADP(+) = (S)-2-ethyl-2-hydroxy-3-oxobutanoate + NADPH + H(+). It participates in amino-acid biosynthesis; L-isoleucine biosynthesis; L-isoleucine from 2-oxobutanoate: step 2/4. It functions in the pathway amino-acid biosynthesis; L-valine biosynthesis; L-valine from pyruvate: step 2/4. In terms of biological role, involved in the biosynthesis of branched-chain amino acids (BCAA). Catalyzes an alkyl-migration followed by a ketol-acid reduction of (S)-2-acetolactate (S2AL) to yield (R)-2,3-dihydroxy-isovalerate. In the isomerase reaction, S2AL is rearranged via a Mg-dependent methyl migration to produce 3-hydroxy-3-methyl-2-ketobutyrate (HMKB). In the reductase reaction, this 2-ketoacid undergoes a metal-dependent reduction by NADPH to yield (R)-2,3-dihydroxy-isovalerate. This Herminiimonas arsenicoxydans protein is Ketol-acid reductoisomerase (NADP(+)).